Reading from the N-terminus, the 128-residue chain is Large ribosomal subunit protein mL51 (128 aa).

A mitochondrion-targeting transit peptide spans 1-31; it reads MAGNLLSGAGRRLWDWVPLACRSFSLGVPRL.

The protein belongs to the mitochondrion-specific ribosomal protein mL51 family. As to quaternary structure, component of the mitochondrial large ribosomal subunit (mt-LSU). Mature mammalian 55S mitochondrial ribosomes consist of a small (28S) and a large (39S) subunit. The 28S small subunit contains a 12S ribosomal RNA (12S mt-rRNA) and 30 different proteins. The 39S large subunit contains a 16S rRNA (16S mt-rRNA), a copy of mitochondrial valine transfer RNA (mt-tRNA(Val)), which plays an integral structural role, and 52 different proteins. Interacts with OXA1L.

Its subcellular location is the mitochondrion. This Homo sapiens (Human) protein is Large ribosomal subunit protein mL51 (MRPL51).